Here is a 122-residue protein sequence, read N- to C-terminus: S-adenosylmethionine decarboxylase proenzyme (122 aa).

S63 (schiff-base intermediate with substrate; via pyruvic acid) is an active-site residue. Position 63 is a pyruvic acid (Ser); by autocatalysis (S63). H68 (proton acceptor; for processing activity) is an active-site residue. Residue C83 is the Proton donor; for catalytic activity of the active site.

Belongs to the prokaryotic AdoMetDC family. Type 1 subfamily. In terms of assembly, heterotetramer of two alpha and two beta chains arranged as a dimer of alpha/beta heterodimers. Requires pyruvate as cofactor. Is synthesized initially as an inactive proenzyme. Formation of the active enzyme involves a self-maturation process in which the active site pyruvoyl group is generated from an internal serine residue via an autocatalytic post-translational modification. Two non-identical subunits are generated from the proenzyme in this reaction, and the pyruvate is formed at the N-terminus of the alpha chain, which is derived from the carboxyl end of the proenzyme. The post-translation cleavage follows an unusual pathway, termed non-hydrolytic serinolysis, in which the side chain hydroxyl group of the serine supplies its oxygen atom to form the C-terminus of the beta chain, while the remainder of the serine residue undergoes an oxidative deamination to produce ammonia and the pyruvoyl group blocking the N-terminus of the alpha chain.

It catalyses the reaction S-adenosyl-L-methionine + H(+) = S-adenosyl 3-(methylsulfanyl)propylamine + CO2. The protein operates within amine and polyamine biosynthesis; S-adenosylmethioninamine biosynthesis; S-adenosylmethioninamine from S-adenosyl-L-methionine: step 1/1. Its function is as follows. Catalyzes the decarboxylation of S-adenosylmethionine to S-adenosylmethioninamine (dcAdoMet), the propylamine donor required for the synthesis of the polyamines spermine and spermidine from the diamine putrescine. This Methanococcus maripaludis (strain C7 / ATCC BAA-1331) protein is S-adenosylmethionine decarboxylase proenzyme.